A 660-amino-acid polypeptide reads, in one-letter code: Junctophilin-1 (660 aa).

The Cytoplasmic segment spans residues 1–638; sequence MTGGRFDFDD…EKEANSGPNS (638 aa). MORN repeat units lie at residues 14–36, 38–59, 60–82, 106–128, and 129–151; these read YCGG…KGQG, YSGS…SGNT, YQGY…KWMY, YEGT…DGGT, and YQGQ…PYGM. 3 positions are modified to phosphoserine: serine 157, serine 216, and serine 220. Residues 228-247 are disordered; that stretch reads SKSSISSKRSSVRSDAAMSR. MORN repeat units lie at residues 281-303 and 304-326; these read YMGE…NGMK and YEGE…DGSK. Positions 437–454 are enriched in basic and acidic residues; sequence NPEEKVLEKPPSPKESPH. The interval 437 to 631 is disordered; sequence NPEEKVLEKP…NDTCPSLEKE (195 aa). The residue at position 452 (serine 452) is a Phosphoserine. The residue at position 461 (threonine 461) is a Phosphothreonine. Serine 465, serine 469, and serine 475 each carry phosphoserine. Residues 466 to 477 show a composition bias toward low complexity; that stretch reads PESSPKQSHSPQ. Composition is skewed to basic and acidic residues over residues 562-571 and 598-612; these read PPEDREDDRG and VAKE…KKSE. The chain crosses the membrane as a helical; Anchor for type IV membrane protein span at residues 639–659; sequence IMIVLVMLLNIGLAILFVHFL.

This sequence belongs to the junctophilin family. Specifically expressed in skeletal muscle. Weakly expressed in embryos and neonates. Abundant in young adult muscles.

It localises to the cell membrane. The protein resides in the endoplasmic reticulum membrane. Its subcellular location is the sarcoplasmic reticulum membrane. Functionally, junctophilins contribute to the formation of junctional membrane complexes (JMCs) which link the plasma membrane with the endoplasmic or sarcoplasmic reticulum in excitable cells. Provides a structural foundation for functional cross-talk between the cell surface and intracellular calcium release channels. JPH1 contributes to the construction of the skeletal muscle triad by linking the t-tubule (transverse-tubule) and SR (sarcoplasmic reticulum) membranes. The chain is Junctophilin-1 (Jph1) from Mus musculus (Mouse).